The primary structure comprises 160 residues: 2-C-methyl-D-erythritol 2,4-cyclodiphosphate synthase (160 aa).

A divalent metal cation-binding residues include aspartate 11 and histidine 13. 4-CDP-2-C-methyl-D-erythritol 2-phosphate-binding positions include 11-13 (DVH) and 37-38 (HS). Histidine 45 contributes to the a divalent metal cation binding site. Residues 59 to 61 (DIG) and arginine 145 each bind 4-CDP-2-C-methyl-D-erythritol 2-phosphate.

Belongs to the IspF family. In terms of assembly, homotrimer. It depends on a divalent metal cation as a cofactor.

It catalyses the reaction 4-CDP-2-C-methyl-D-erythritol 2-phosphate = 2-C-methyl-D-erythritol 2,4-cyclic diphosphate + CMP. The protein operates within isoprenoid biosynthesis; isopentenyl diphosphate biosynthesis via DXP pathway; isopentenyl diphosphate from 1-deoxy-D-xylulose 5-phosphate: step 4/6. Functionally, involved in the biosynthesis of isopentenyl diphosphate (IPP) and dimethylallyl diphosphate (DMAPP), two major building blocks of isoprenoid compounds. Catalyzes the conversion of 4-diphosphocytidyl-2-C-methyl-D-erythritol 2-phosphate (CDP-ME2P) to 2-C-methyl-D-erythritol 2,4-cyclodiphosphate (ME-CPP) with a corresponding release of cytidine 5-monophosphate (CMP). This is 2-C-methyl-D-erythritol 2,4-cyclodiphosphate synthase from Neisseria meningitidis serogroup A / serotype 4A (strain DSM 15465 / Z2491).